The sequence spans 215 residues: uncharacterized protein (215 aa).

A run of 5 helical transmembrane segments spans residues 9–29 (WTFY…TIEG), 50–70 (LTVG…TSLF), 77–97 (IGAL…NFIL), 107–127 (IIVF…YVSA), and 160–180 (ILFA…LTAI).

It localises to the cell membrane. This is an uncharacterized protein from Bacillus subtilis (strain 168).